A 351-amino-acid polypeptide reads, in one-letter code: Outer membrane porin PhoE (351 aa).

The first 21 residues, Met1–Ala21, serve as a signal peptide directing secretion.

This sequence belongs to the Gram-negative porin family. As to quaternary structure, homotrimer.

Its subcellular location is the cell outer membrane. Functionally, uptake of inorganic phosphate, phosphorylated compounds, and some other negatively charged solutes. In Citrobacter freundii, this protein is Outer membrane porin PhoE (phoE).